The sequence spans 239 residues: Octanoyltransferase (239 aa).

A BPL/LPL catalytic domain is found at 48-236 (EGGDELVWLV…AFETVFGETV (189 aa)). Substrate contacts are provided by residues 87–94 (RGGEYTYH), 167–169 (ALG), and 180–182 (GLS). The active-site Acyl-thioester intermediate is the C198.

Belongs to the LipB family.

It is found in the cytoplasm. It carries out the reaction octanoyl-[ACP] + L-lysyl-[protein] = N(6)-octanoyl-L-lysyl-[protein] + holo-[ACP] + H(+). Its pathway is protein modification; protein lipoylation via endogenous pathway; protein N(6)-(lipoyl)lysine from octanoyl-[acyl-carrier-protein]: step 1/2. Catalyzes the transfer of endogenously produced octanoic acid from octanoyl-acyl-carrier-protein onto the lipoyl domains of lipoate-dependent enzymes. Lipoyl-ACP can also act as a substrate although octanoyl-ACP is likely to be the physiological substrate. This chain is Octanoyltransferase, found in Rhizobium etli (strain CIAT 652).